The chain runs to 411 residues: Arginine deiminase (411 aa).

Cysteine 401 functions as the Amidino-cysteine intermediate in the catalytic mechanism.

This sequence belongs to the arginine deiminase family.

It is found in the cytoplasm. The enzyme catalyses L-arginine + H2O = L-citrulline + NH4(+). It participates in amino-acid degradation; L-arginine degradation via ADI pathway; carbamoyl phosphate from L-arginine: step 1/2. The chain is Arginine deiminase from Staphylococcus aureus (strain MRSA252).